The sequence spans 452 residues: Inner membrane metabolite transport protein YdjE (452 aa).

Residues Met1–His20 are Cytoplasmic-facing. A helical membrane pass occupies residues Tyr21–Val43. At Val44–Phe57 the chain is on the periplasmic side. A helical membrane pass occupies residues Leu58–Ile80. At Gly81–Arg91 the chain is on the cytoplasmic side. The chain crosses the membrane as a helical span at residues Ile92–Ile114. Residues Phe115–Arg117 are Periplasmic-facing. The chain crosses the membrane as a helical span at residues Phe118–Pro140. Topologically, residues Ala141–Ser152 are cytoplasmic. Residues Phe153–Trp175 traverse the membrane as a helical segment. Residues Arg176–Met178 lie on the Periplasmic side of the membrane. The helical transmembrane segment at Phe179–Ile198 threads the bilayer. Topologically, residues Glu199–Val265 are cytoplasmic. Residues Ala266–Phe288 form a helical membrane-spanning segment. Topologically, residues Val289 to Lys297 are periplasmic. A helical membrane pass occupies residues Ser298–Ile320. Topologically, residues Asp321–Arg326 are cytoplasmic. Residues Leu327–Ser344 traverse the membrane as a helical segment. The Periplasmic portion of the chain corresponds to Ile345–Leu353. Residues Ile354–Pro376 traverse the membrane as a helical segment. Residues Glu377–Ser388 are Cytoplasmic-facing. The helical transmembrane segment at Gly389–Thr411 threads the bilayer. Over His412–Ser415 the chain is Periplasmic. The chain crosses the membrane as a helical span at residues Ile416 to Ile438. The Cytoplasmic portion of the chain corresponds to Glu439–Asn452.

This sequence belongs to the major facilitator superfamily. Sugar transporter (TC 2.A.1.1) family.

Its subcellular location is the cell inner membrane. The protein is Inner membrane metabolite transport protein YdjE (ydjE) of Escherichia coli (strain K12).